A 246-amino-acid chain; its full sequence is TVP38/TMEM64 family membrane protein MT0653 (246 aa).

The next 5 helical transmembrane spans lie at leucine 19 to isoleucine 39, leucine 57 to alanine 77, leucine 83 to valine 103, alanine 157 to alanine 177, and leucine 196 to alanine 216.

Belongs to the TVP38/TMEM64 family.

The protein resides in the cell membrane. This is TVP38/TMEM64 family membrane protein MT0653 from Mycobacterium tuberculosis (strain CDC 1551 / Oshkosh).